Consider the following 471-residue polypeptide: MTTPQEVLKLIQDQKIQMIDLKFIDTPGTWQHLTVYYNQIDESSFTDGVPFDGSSIRGWKGIEESDMTMVLDPNTAWIDPFMKEPTLSIICSIKEPRTGEWYNRCPRVIAQKAIDYLVSTGLGDTAFFGPEAEFFIFDDARFDQTANSGYYYVDSVEGRWNSGKDEGPNLAYKPRFKEGYFPVAPTDTFQDMRTEMLLTMAACGVPIEKQHHEVATGGQCELGFRFGKLIEAADWLMTYKYVIKNVAKKYGRTVTFMPKPIFGDNGSGMHCHQSIWKDGKPLFGGDKYAGLSDMALYYIGGILKHAPALLGITNPTTNSYKRLVPGYEAPVNLAYSQGNRSASVRIPLSGTNPKAKRLEFRCPDATSNPYLAFAAMLCAGIDGIKNKIHPGEPLDRNIYELSPEELAKVPSTPGSLELALEALENDHAFLTESGVFTEDFIQNWIEYKLVNEVKQLQLRPHPYEFYLYYDC.

Residues 14 to 99 (QKIQMIDLKF…ICSIKEPRTG (86 aa)) form the GS beta-grasp domain. In terms of domain architecture, GS catalytic spans 106-471 (PRVIAQKAID…PYEFYLYYDC (366 aa)). Mg(2+) contacts are provided by glutamate 131 and glutamate 133. Residue glutamate 208 coordinates ATP. Mg(2+) is bound by residues glutamate 213 and glutamate 221. L-glutamate contacts are provided by residues 265-266 (NG) and glycine 266. Histidine 270 serves as a coordination point for Mg(2+). ATP contacts are provided by residues 272–274 (HQS) and serine 274. L-glutamate is bound by residues arginine 322, glutamate 328, and arginine 340. 3 residues coordinate ATP: arginine 340, arginine 345, and lysine 354. Glutamate 359 contacts Mg(2+). Position 361 (arginine 361) interacts with L-glutamate. Residue tyrosine 399 is modified to O-AMP-tyrosine.

The protein belongs to the glutamine synthetase family. Oligomer of 12 subunits arranged in the form of two hexagons. Requires Mg(2+) as cofactor.

It is found in the cytoplasm. The enzyme catalyses L-glutamate + NH4(+) + ATP = L-glutamine + ADP + phosphate + H(+). With respect to regulation, the activity of this enzyme could be controlled by adenylation under conditions of abundant glutamine. Its function is as follows. Involved in nitrogen metabolism via ammonium assimilation. Catalyzes the ATP-dependent biosynthesis of glutamine from glutamate and ammonia. This Microchaete diplosiphon (Fremyella diplosiphon) protein is Glutamine synthetase.